The chain runs to 420 residues: MKDLFEHIYANKGSIGRWSDHAEGYYVFPKLEGELGPHMKFQGKEILNWSINDYLGLANHPEVRKVDAEAAAEYGAAYPMGARMMSGHTTMHEELEKRLAKFVHKEASYLLNFGYQGMVSIIDALVTKNDVIVYDVDAHACIIDGVRLHFGKRYTYQHNDMESFEKNLERAAKLAETTGGGILVISEGVFGMRGEQGKLKEIVALKKKYPFRLLVDDAHGFGTLGPRGEGTGVHQGVQDEIDVYFSTFAKSMAGIGAFVAGNAKVVDYLKYNLRSQMFAKSLPMIYVKGALKRLEMMETMPELQQKLWDNVNRLQNGLKERGFNIGNTNTCVTPVFLHGSIPEAMAMVNDLREHYGIFLSIVVYPVIPKGMILLRIIPTASHSKEDIDRTLEAFSAIREKLETGVYRAINAELTKEMGDM.

Pyridoxal 5'-phosphate contacts are provided by residues 114 to 115 (GY), His219, Thr247, and Ala249. Lys250 carries the N6-(pyridoxal phosphate)lysine modification.

Belongs to the class-II pyridoxal-phosphate-dependent aminotransferase family. It depends on pyridoxal 5'-phosphate as a cofactor.

It carries out the reaction isopentadecanoyl-CoA + L-cysteate + H(+) = 3-oxocapnine + CO2 + CoA. It functions in the pathway lipid metabolism. Its function is as follows. Transferase involved in the biosynthesis of capnine, a sulfonolipid present in the outer membrane of gliding Bacteroidetes and essential for gliding motility. Catalyzes the formation of 3-dehydrocapnine from cysteate and isopentadecanoyl-CoA (13-methyl-myristoyl-CoA). In vitro, products are also detected when 13-methyl-myristic acid is substituted with tridecylic acid, myristic acid, pentadecanoic acid or palmitic acid. This Capnocytophaga ochracea (strain ATCC 27872 / DSM 7271 / CCUG 9716 / JCM 12966 / NCTC 12371 / SS31 / VPI 2845) (Bacteroides ochraceus) protein is Cysteate-C-fatty acyltransferase.